A 322-amino-acid chain; its full sequence is Protein-methionine-sulfoxide reductase catalytic subunit MsrP (322 aa).

The segment at residues M1–A59 is a signal peptide (tat-type signal). Mo-molybdopterin contacts are provided by residues N79, Y82–E83, C137, T172, N220, R225, and S236–K238.

It belongs to the MsrP family. As to quaternary structure, heterodimer of a catalytic subunit (MsrP) and a heme-binding subunit (MsrQ). Requires Mo-molybdopterin as cofactor. Predicted to be exported by the Tat system. The position of the signal peptide cleavage has not been experimentally proven.

The protein localises to the periplasm. It catalyses the reaction L-methionyl-[protein] + a quinone + H2O = L-methionyl-(S)-S-oxide-[protein] + a quinol. The enzyme catalyses L-methionyl-[protein] + a quinone + H2O = L-methionyl-(R)-S-oxide-[protein] + a quinol. Functionally, part of the MsrPQ system that repairs oxidized periplasmic proteins containing methionine sulfoxide residues (Met-O), using respiratory chain electrons. Thus protects these proteins from oxidative-stress damage caused by reactive species of oxygen and chlorine generated by the host defense mechanisms. MsrPQ is essential for the maintenance of envelope integrity under bleach stress, rescuing a wide series of structurally unrelated periplasmic proteins from methionine oxidation. The catalytic subunit MsrP is non-stereospecific, being able to reduce both (R-) and (S-) diastereoisomers of methionine sulfoxide. This chain is Protein-methionine-sulfoxide reductase catalytic subunit MsrP, found in Xanthomonas campestris pv. campestris (strain ATCC 33913 / DSM 3586 / NCPPB 528 / LMG 568 / P 25).